We begin with the raw amino-acid sequence, 143 residues long: SKSSTETPLSYNQLNYKENLQRFFNSKPVTAPTQLDPVNRDSSYASTSREDACSAISPDHGGECSGGSGSSGNCTTNSNIRMSSFTNTSITGTGTSGCGNSGGKLSESGPVEVGGAAADAGPSLAADNSIPPISVTLTESLLN.

The segment at 25 to 130 (NSKPVTAPTQ…GPSLAADNSI (106 aa)) is disordered. Low complexity-rich tracts occupy residues 71–93 (SGNC…ITGT) and 114–126 (GGAA…SLAA).

As to quaternary structure, forms a heterodimer with timeless (TIM); the complex then translocates into the nucleus. Phosphorylated with a circadian rhythmicity, probably by the double-time protein (dbt). Phosphorylation could be implicated in the stability of per monomer and in the formation of heterodimer per-tim.

It localises to the nucleus. Its subcellular location is the cytoplasm. The protein localises to the perinuclear region. Essential for biological clock functions. Determines the period length of circadian and ultradian rhythms; an increase in PER dosage leads to shortened circadian rhythms and a decrease leads to lengthened circadian rhythms. Essential for the circadian rhythmicity of locomotor activity, eclosion behavior, and for the rhythmic component of the male courtship song that originates in the thoracic nervous system. The biological cycle depends on the rhythmic formation and nuclear localization of the TIM-PER complex. Light induces the degradation of TIM, which promotes elimination of PER. Nuclear activity of the heterodimer coordinatively regulates PER and TIM transcription through a negative feedback loop. Behaves as a negative element in circadian transcriptional loop. Does not appear to bind DNA, suggesting indirect transcriptional inhibition. This Drosophila picticornis (Fruit fly) protein is Period circadian protein (per).